Consider the following 159-residue polypeptide: Ribosomal RNA large subunit methyltransferase H (159 aa).

Residues Leu76, Gly108, and 127–132 (FSRMTF) each bind S-adenosyl-L-methionine.

Belongs to the RNA methyltransferase RlmH family. In terms of assembly, homodimer.

It is found in the cytoplasm. It carries out the reaction pseudouridine(1915) in 23S rRNA + S-adenosyl-L-methionine = N(3)-methylpseudouridine(1915) in 23S rRNA + S-adenosyl-L-homocysteine + H(+). In terms of biological role, specifically methylates the pseudouridine at position 1915 (m3Psi1915) in 23S rRNA. In Bacillus licheniformis (strain ATCC 14580 / DSM 13 / JCM 2505 / CCUG 7422 / NBRC 12200 / NCIMB 9375 / NCTC 10341 / NRRL NRS-1264 / Gibson 46), this protein is Ribosomal RNA large subunit methyltransferase H.